The chain runs to 288 residues: Pantothenate synthetase (288 aa).

ATP is bound at residue 30–37; it reads MGFLHEGH. His37 acts as the Proton donor in catalysis. Gln61 lines the (R)-pantoate pocket. A beta-alanine-binding site is contributed by Gln61. Residue 147–150 participates in ATP binding; sequence GLKD. Gln153 provides a ligand contact to (R)-pantoate. Residues Val176 and 184–187 each bind ATP; that span reads KSSR.

This sequence belongs to the pantothenate synthetase family. Homodimer.

Its subcellular location is the cytoplasm. It carries out the reaction (R)-pantoate + beta-alanine + ATP = (R)-pantothenate + AMP + diphosphate + H(+). It participates in cofactor biosynthesis; (R)-pantothenate biosynthesis; (R)-pantothenate from (R)-pantoate and beta-alanine: step 1/1. In terms of biological role, catalyzes the condensation of pantoate with beta-alanine in an ATP-dependent reaction via a pantoyl-adenylate intermediate. The sequence is that of Pantothenate synthetase from Bacillus pumilus (strain SAFR-032).